The sequence spans 252 residues: Enolase-phosphatase E1 (252 aa).

Mg(2+)-binding residues include Asp14 and Glu16. Residues 143 to 144 (SS) and Lys177 each bind substrate. Mg(2+) is bound at residue Asp202.

Belongs to the HAD-like hydrolase superfamily. MasA/MtnC family. In terms of assembly, monomer. Mg(2+) serves as cofactor.

The protein localises to the cytoplasm. It localises to the nucleus. It carries out the reaction 5-methylsulfanyl-2,3-dioxopentyl phosphate + H2O = 1,2-dihydroxy-5-(methylsulfanyl)pent-1-en-3-one + phosphate. It functions in the pathway amino-acid biosynthesis; L-methionine biosynthesis via salvage pathway; L-methionine from S-methyl-5-thio-alpha-D-ribose 1-phosphate: step 3/6. Its pathway is amino-acid biosynthesis; L-methionine biosynthesis via salvage pathway; L-methionine from S-methyl-5-thio-alpha-D-ribose 1-phosphate: step 4/6. Its function is as follows. Bifunctional enzyme that catalyzes the enolization of 2,3-diketo-5-methylthiopentyl-1-phosphate (DK-MTP-1-P) into the intermediate 2-hydroxy-3-keto-5-methylthiopentenyl-1-phosphate (HK-MTPenyl-1-P), which is then dephosphorylated to form the acireductone 1,2-dihydroxy-3-keto-5-methylthiopentene (DHK-MTPene). This Drosophila pseudoobscura pseudoobscura (Fruit fly) protein is Enolase-phosphatase E1.